Here is a 430-residue protein sequence, read N- to C-terminus: Enolase (430 aa).

Q165 is a (2R)-2-phosphoglycerate binding site. The Proton donor role is filled by E207. Residues D244, E287, and D314 each coordinate Mg(2+). (2R)-2-phosphoglycerate-binding residues include K339, R368, S369, and K390. K339 acts as the Proton acceptor in catalysis.

Belongs to the enolase family. Component of the RNA degradosome, a multiprotein complex involved in RNA processing and mRNA degradation. The cofactor is Mg(2+).

It localises to the cytoplasm. Its subcellular location is the secreted. It is found in the cell surface. The enzyme catalyses (2R)-2-phosphoglycerate = phosphoenolpyruvate + H2O. It participates in carbohydrate degradation; glycolysis; pyruvate from D-glyceraldehyde 3-phosphate: step 4/5. Functionally, catalyzes the reversible conversion of 2-phosphoglycerate (2-PG) into phosphoenolpyruvate (PEP). It is essential for the degradation of carbohydrates via glycolysis. The polypeptide is Enolase (Xanthomonas axonopodis pv. citri (strain 306)).